Consider the following 136-residue polypeptide: MVKIRLKRAGRKKMPVYQIVVADSRSPRDGKFLEVVGHYQPTLKPHSITLKKDRVEYWMHCGAQPTATVNSLIRATGLLYELRMKKLGRSEADIATEMEKWEAAQMARREKRVTLKARRRRAKKEAEAASASSAEG.

Positions 114–123 (TLKARRRRAK) are enriched in basic residues. Positions 114–136 (TLKARRRRAKKEAEAASASSAEG) are disordered.

It belongs to the bacterial ribosomal protein bS16 family.

The chain is Small ribosomal subunit protein bS16 from Chlorobium chlorochromatii (strain CaD3).